The following is a 329-amino-acid chain: 2,3,4,5-tetrahydropyridine-2,6-dicarboxylate N-succinyltransferase (329 aa).

Residues D177 and E194 each contribute to the Mg(2+) site. E210 (acyl-anhydride intermediate) is an active-site residue. Succinyl-CoA-binding positions include R212, G227, S230, A253, 268–269 (EA), G276, K288, and 301–304 (RRNS).

This sequence belongs to the type 2 tetrahydrodipicolinate N-succinyltransferase family. As to quaternary structure, homotrimer.

The protein resides in the cytoplasm. The enzyme catalyses (S)-2,3,4,5-tetrahydrodipicolinate + succinyl-CoA + H2O = (S)-2-succinylamino-6-oxoheptanedioate + CoA. The protein operates within amino-acid biosynthesis; L-lysine biosynthesis via DAP pathway; LL-2,6-diaminopimelate from (S)-tetrahydrodipicolinate (succinylase route): step 1/3. Functionally, catalyzes the conversion of the cyclic tetrahydrodipicolinate (THDP) into the acyclic N-succinyl-L-2-amino-6-oxopimelate using succinyl-CoA. The sequence is that of 2,3,4,5-tetrahydropyridine-2,6-dicarboxylate N-succinyltransferase from Streptomyces coelicolor (strain ATCC BAA-471 / A3(2) / M145).